The primary structure comprises 457 residues: DNA repair protein RadA (457 aa).

The C4-type zinc-finger motif lies at C10 to C27. ATP is bound at residue G97–S104. Positions K254–G258 match the RadA KNRFG motif motif. Positions D353 to R457 are lon-protease-like.

It belongs to the RecA family. RadA subfamily.

Functionally, DNA-dependent ATPase involved in processing of recombination intermediates, plays a role in repairing DNA breaks. Stimulates the branch migration of RecA-mediated strand transfer reactions, allowing the 3' invading strand to extend heteroduplex DNA faster. Binds ssDNA in the presence of ADP but not other nucleotides, has ATPase activity that is stimulated by ssDNA and various branched DNA structures, but inhibited by SSB. Does not have RecA's homology-searching function. The chain is DNA repair protein RadA from Halalkalibacterium halodurans (strain ATCC BAA-125 / DSM 18197 / FERM 7344 / JCM 9153 / C-125) (Bacillus halodurans).